We begin with the raw amino-acid sequence, 651 residues long: Transcription termination factor FttA (651 aa).

Residues 1–200 (MTFLIKRETQ…ITGLGGFREV (200 aa)) form an archaeal CPSF-KH domain region. Positions 12-79 (DQILRDIRAV…ISVRPDPEVL (68 aa)) are KHa. The interval 80 to 147 (LPPEEAEKLI…WAPKVVRTPP (68 aa)) is KHb. The metallo-beta-lactamase N-terminus stretch occupies residues 188-398 (WIRITGLGGF…LVMESTYGGA (211 aa)). Positions 256, 258, 260, 261, 344, and 367 each coordinate Zn(2+). The tract at residues 399–592 (NDIQMPREEA…MEVHTIDGFS (194 aa)) is beta-Casp. Residues 593-651 (GHADRRELMNYVAKVRPRPERIITVHGEPQKCLDLATSIHRKFGISTRAPNNLDTIRLR) form a metallo-beta-lactamase C-terminus region. His618 is a binding site for Zn(2+).

Belongs to the metallo-beta-lactamase superfamily. RNA-metabolizing metallo-beta-lactamase-like family. FttA subfamily. As to quaternary structure, homodimer. Interacts with RNA polymerase (RNAP), interacts with the Spt4-Spt5 complex. Zn(2+) serves as cofactor.

Its function is as follows. Terminates transcription on the whole genome. Termination is linked to FttA-mediated RNA cleavage and does not require NTP hydrolysis. Cleaves endonucleolytically at the RNA exit channel of RNA polymerase (RNAP); the 5'-3' exonuclease activity of this protein degrades the nascent RNA released from RNAP. In terms of biological role, has nuclease activity on single-stranded RNA. In Pyrococcus horikoshii (strain ATCC 700860 / DSM 12428 / JCM 9974 / NBRC 100139 / OT-3), this protein is Transcription termination factor FttA.